Consider the following 355-residue polypeptide: Alanine racemase (355 aa).

The active-site Proton acceptor; specific for D-alanine is the lysine 34. At lysine 34 the chain carries N6-(pyridoxal phosphate)lysine. Arginine 133 contributes to the substrate binding site. Residue tyrosine 249 is the Proton acceptor; specific for L-alanine of the active site. Methionine 297 is a substrate binding site.

This sequence belongs to the alanine racemase family. The cofactor is pyridoxal 5'-phosphate.

The catalysed reaction is L-alanine = D-alanine. It functions in the pathway amino-acid biosynthesis; D-alanine biosynthesis; D-alanine from L-alanine: step 1/1. Catalyzes the interconversion of L-alanine and D-alanine. May also act on other amino acids. The protein is Alanine racemase (alr) of Rickettsia africae (strain ESF-5).